A 151-amino-acid polypeptide reads, in one-letter code: Transcriptional regulator MraZ (151 aa).

2 consecutive SpoVT-AbrB domains span residues 5 to 51 (AHEL…PVAE) and 81 to 124 (AEIL…GREQ).

This sequence belongs to the MraZ family. In terms of assembly, forms oligomers.

It localises to the cytoplasm. The protein localises to the nucleoid. The protein is Transcriptional regulator MraZ of Neisseria meningitidis serogroup C / serotype 2a (strain ATCC 700532 / DSM 15464 / FAM18).